The sequence spans 151 residues: uncharacterized protein (151 aa).

A run of 4 helical transmembrane segments spans residues 22-42, 62-82, 97-117, and 121-141; these read IVSI…GFFF, ALFI…TKII, LFAF…ADYF, and IYIP…IELA.

The protein resides in the cell membrane. This is an uncharacterized protein from Bacillus subtilis (strain 168).